Consider the following 255-residue polypeptide: Methylthioribulose-1-phosphate dehydratase (255 aa).

Residue cysteine 98 coordinates substrate. Residues histidine 116 and histidine 118 each coordinate Zn(2+). Glutamate 150 (proton donor/acceptor) is an active-site residue. Histidine 207 contacts Zn(2+).

It belongs to the aldolase class II family. MtnB subfamily. It depends on Zn(2+) as a cofactor.

The protein resides in the cytoplasm. The catalysed reaction is 5-(methylsulfanyl)-D-ribulose 1-phosphate = 5-methylsulfanyl-2,3-dioxopentyl phosphate + H2O. It participates in amino-acid biosynthesis; L-methionine biosynthesis via salvage pathway; L-methionine from S-methyl-5-thio-alpha-D-ribose 1-phosphate: step 2/6. Functionally, catalyzes the dehydration of methylthioribulose-1-phosphate (MTRu-1-P) into 2,3-diketo-5-methylthiopentyl-1-phosphate (DK-MTP-1-P). The chain is Methylthioribulose-1-phosphate dehydratase from Pyricularia oryzae (strain 70-15 / ATCC MYA-4617 / FGSC 8958) (Rice blast fungus).